A 369-amino-acid polypeptide reads, in one-letter code: Alanine racemase (369 aa).

Lys35 (proton acceptor; specific for D-alanine) is an active-site residue. At Lys35 the chain carries N6-(pyridoxal phosphate)lysine. Residue Arg130 coordinates substrate. Residue Tyr257 is the Proton acceptor; specific for L-alanine of the active site. Met305 serves as a coordination point for substrate.

It belongs to the alanine racemase family. Requires pyridoxal 5'-phosphate as cofactor.

The enzyme catalyses L-alanine = D-alanine. It functions in the pathway amino-acid biosynthesis; D-alanine biosynthesis; D-alanine from L-alanine: step 1/1. Its function is as follows. Catalyzes the interconversion of L-alanine and D-alanine. May also act on other amino acids. This Paracidovorax citrulli (strain AAC00-1) (Acidovorax citrulli) protein is Alanine racemase (alr).